The following is a 225-amino-acid chain: Uracil-DNA glycosylase (225 aa).

Asp65 functions as the Proton acceptor in the catalytic mechanism.

It belongs to the uracil-DNA glycosylase (UDG) superfamily. UNG family.

It is found in the cytoplasm. The enzyme catalyses Hydrolyzes single-stranded DNA or mismatched double-stranded DNA and polynucleotides, releasing free uracil.. Its function is as follows. Excises uracil residues from the DNA which can arise as a result of misincorporation of dUMP residues by DNA polymerase or due to deamination of cytosine. This is Uracil-DNA glycosylase from Bacillus cereus (strain ATCC 10987 / NRS 248).